The sequence spans 445 residues: MIHGKTLEAWQQSHPIIADLVALKETSWFNPGIAQASEALRDVGLTAADVQAASARLQRFAPYLATVFPETAPAGGIIESHIAPLPLLRQRLIEEGALRNAGSLWLKADSDLPVSGSIKARGGIHEVLKHAEDLALAAGLITPTDDYTRLASEQARAFFGQYKIAVGSTGNLGLSIGIMSAKLGFQVSVHMSSDARQWKKDKLRANGVTVVEHASDYSVAVEQGRQQAAADPSCYFVDDENSPQLFLGYAVAAERLALQFDQAGIQVDADHPLFVYLPCGVGGGPGGVAFGLKLVFGDAVHCIFAEPTHSPCMLLGVYTGLHDETSVQDFGIDNITAADGLAVGRPSGFVGKAMQRLIDGYYTVTDEALYRLMVIAHEQDKVKLEPSALAGVPGMLRVLQADEYLARQGFTPTQLQQATHLVWGTGGSMVPEDEFNAYLAKGRSV.

The residue at position 119 (K119) is an N6-(pyridoxal phosphate)lysine.

The protein belongs to the serine/threonine dehydratase family. DsdA subfamily. The cofactor is pyridoxal 5'-phosphate.

It catalyses the reaction D-serine = pyruvate + NH4(+). This Pseudomonas putida (strain GB-1) protein is Probable D-serine dehydratase.